The sequence spans 468 residues: ATP synthase subunit beta (468 aa).

148-155 (GGAGVGKT) contributes to the ATP binding site.

It belongs to the ATPase alpha/beta chains family. F-type ATPases have 2 components, CF(1) - the catalytic core - and CF(0) - the membrane proton channel. CF(1) has five subunits: alpha(3), beta(3), gamma(1), delta(1), epsilon(1). CF(0) has three main subunits: a(1), b(2) and c(9-12). The alpha and beta chains form an alternating ring which encloses part of the gamma chain. CF(1) is attached to CF(0) by a central stalk formed by the gamma and epsilon chains, while a peripheral stalk is formed by the delta and b chains.

It localises to the cell membrane. The catalysed reaction is ATP + H2O + 4 H(+)(in) = ADP + phosphate + 5 H(+)(out). Produces ATP from ADP in the presence of a proton gradient across the membrane. The catalytic sites are hosted primarily by the beta subunits. The polypeptide is ATP synthase subunit beta (Stenotrophomonas maltophilia (strain K279a)).